The primary structure comprises 61 residues: Probable tautomerase stu1128 (61 aa).

Residue proline 2 is the Proton acceptor; via imino nitrogen of the active site.

It belongs to the 4-oxalocrotonate tautomerase family.

The chain is Probable tautomerase stu1128 from Streptococcus thermophilus (strain ATCC BAA-250 / LMG 18311).